We begin with the raw amino-acid sequence, 206 residues long: Ribosomal RNA small subunit methyltransferase G (206 aa).

S-adenosyl-L-methionine-binding positions include Gly73, Leu78, 124–125, and Arg139; that span reads VE.

Belongs to the methyltransferase superfamily. RNA methyltransferase RsmG family.

It is found in the cytoplasm. The enzyme catalyses guanosine(527) in 16S rRNA + S-adenosyl-L-methionine = N(7)-methylguanosine(527) in 16S rRNA + S-adenosyl-L-homocysteine. Specifically methylates the N7 position of guanine in position 527 of 16S rRNA. This is Ribosomal RNA small subunit methyltransferase G from Photobacterium profundum (strain SS9).